The following is a 569-amino-acid chain: Urease subunit beta (569 aa).

Residues 131–569 (GGIDTHIHFI…VSLAQLFSIF (439 aa)) enclose the Urease domain. Ni(2+)-binding residues include H136, H138, and K219. At K219 the chain carries N6-carboxylysine. H221 is a substrate binding site. Residues H248 and H274 each contribute to the Ni(2+) site. Residue H322 is the Proton donor of the active site. Ni(2+) is bound at residue D362.

It belongs to the metallo-dependent hydrolases superfamily. Urease alpha subunit family. As to quaternary structure, heterohexamer of 3 UreA (alpha) and 3 UreB (beta) subunits. It depends on Ni cation as a cofactor. Carboxylation allows a single lysine to coordinate two nickel ions.

The protein localises to the cytoplasm. It catalyses the reaction urea + 2 H2O + H(+) = hydrogencarbonate + 2 NH4(+). It functions in the pathway nitrogen metabolism; urea degradation; CO(2) and NH(3) from urea (urease route): step 1/1. The chain is Urease subunit beta from Helicobacter pylori (strain P12).